A 454-amino-acid chain; its full sequence is Putative F-box/LRR-repeat protein At3g58880 (454 aa).

The region spanning 2–48 is the F-box domain; sequence VDLVSSLPDDLLGHILSLLTTKEAALTSILSKRWRYLIAFVPYLEFD. LRR repeat units lie at residues 77 to 102, 144 to 168, 169 to 194, 214 to 240, 270 to 301, 303 to 327, and 328 to 353; these read LALH…DLLN, SGCR…TLDS, VSWS…NLAN, IKSV…NYTA, LVSV…YLSP, TLQV…VIES, and SMDI…VIKG.

This chain is Putative F-box/LRR-repeat protein At3g58880, found in Arabidopsis thaliana (Mouse-ear cress).